We begin with the raw amino-acid sequence, 236 residues long: Phosphoribosylaminoimidazole-succinocarboxamide synthase (236 aa).

This sequence belongs to the SAICAR synthetase family.

It catalyses the reaction 5-amino-1-(5-phospho-D-ribosyl)imidazole-4-carboxylate + L-aspartate + ATP = (2S)-2-[5-amino-1-(5-phospho-beta-D-ribosyl)imidazole-4-carboxamido]succinate + ADP + phosphate + 2 H(+). Its pathway is purine metabolism; IMP biosynthesis via de novo pathway; 5-amino-1-(5-phospho-D-ribosyl)imidazole-4-carboxamide from 5-amino-1-(5-phospho-D-ribosyl)imidazole-4-carboxylate: step 1/2. The chain is Phosphoribosylaminoimidazole-succinocarboxamide synthase from Campylobacter jejuni subsp. jejuni serotype O:2 (strain ATCC 700819 / NCTC 11168).